The primary structure comprises 265 residues: Shikimate dehydrogenase (NADP(+)) (265 aa).

Residues 15–17 and threonine 62 contribute to the shikimate site; that span reads SLS. The Proton acceptor role is filled by lysine 66. The shikimate site is built by asparagine 87 and aspartate 102. NADP(+) contacts are provided by residues 125-129, 149-154, and leucine 209; these read GAGGA and NRTLEK. Tyrosine 211 contributes to the shikimate binding site. Glycine 233 provides a ligand contact to NADP(+).

This sequence belongs to the shikimate dehydrogenase family. As to quaternary structure, homodimer.

The catalysed reaction is shikimate + NADP(+) = 3-dehydroshikimate + NADPH + H(+). The protein operates within metabolic intermediate biosynthesis; chorismate biosynthesis; chorismate from D-erythrose 4-phosphate and phosphoenolpyruvate: step 4/7. Functionally, involved in the biosynthesis of the chorismate, which leads to the biosynthesis of aromatic amino acids. Catalyzes the reversible NADPH linked reduction of 3-dehydroshikimate (DHSA) to yield shikimate (SA). The polypeptide is Shikimate dehydrogenase (NADP(+)) (Legionella pneumophila subsp. pneumophila (strain Philadelphia 1 / ATCC 33152 / DSM 7513)).